Reading from the N-terminus, the 275-residue chain is Vitamin B12-binding protein (275 aa).

The first 27 residues, 1-27 (MKWIKSTGSIGLSLLLFLSSFSHSLYA), serve as a signal peptide directing secretion. The Fe/B12 periplasmic-binding domain occupies 31-275 (RVISLSPSTT…LCQQLNDNGS (245 aa)). Tyr-58 is a cyanocob(III)alamin binding site. Cys-191 and Cys-267 form a disulfide bridge.

The protein belongs to the BtuF family. The complex is composed of two ATP-binding proteins (BtuD), two transmembrane proteins (BtuC) and a solute-binding protein (BtuF).

The protein resides in the periplasm. Part of the ABC transporter complex BtuCDF involved in vitamin B12 import. Binds vitamin B12 and delivers it to the periplasmic surface of BtuC. In Photorhabdus laumondii subsp. laumondii (strain DSM 15139 / CIP 105565 / TT01) (Photorhabdus luminescens subsp. laumondii), this protein is Vitamin B12-binding protein.